The chain runs to 327 residues: Pyruvate dehydrogenase E1 component subunit beta (327 aa).

A thiamine diphosphate-binding site is contributed by Glu-60. K(+) contacts are provided by Val-113, Ala-161, Ile-162, and Glu-164.

As to quaternary structure, heterodimer of an alpha and a beta chain. Thiamine diphosphate is required as a cofactor.

The protein resides in the plastid. It localises to the chloroplast. It carries out the reaction N(6)-[(R)-lipoyl]-L-lysyl-[protein] + pyruvate + H(+) = N(6)-[(R)-S(8)-acetyldihydrolipoyl]-L-lysyl-[protein] + CO2. Functionally, the pyruvate dehydrogenase complex catalyzes the overall conversion of pyruvate to acetyl-CoA and CO(2). It contains multiple copies of three enzymatic components: pyruvate dehydrogenase (E1), dihydrolipoamide acetyltransferase (E2) and lipoamide dehydrogenase (E3). The sequence is that of Pyruvate dehydrogenase E1 component subunit beta (pdhB) from Cyanidium caldarium (Red alga).